Here is a 338-residue protein sequence, read N- to C-terminus: Ketol-acid reductoisomerase (NADP(+)) (338 aa).

The KARI N-terminal Rossmann domain maps to 2-182 (TKMYYEEDTD…GGARAGVLET (181 aa)). Residues 25-28 (YGSQ), Ser51, Ser53, and 83-86 (DELQ) each bind NADP(+). His108 is a catalytic residue. Gly134 lines the NADP(+) pocket. Residues 183 to 330 (TFRTETETDL…SEIRKLYCWN (148 aa)) form the KARI C-terminal knotted domain. Asp191, Glu195, Glu227, and Glu231 together coordinate Mg(2+). Position 252 (Ser252) interacts with substrate.

The protein belongs to the ketol-acid reductoisomerase family. It depends on Mg(2+) as a cofactor.

It catalyses the reaction (2R)-2,3-dihydroxy-3-methylbutanoate + NADP(+) = (2S)-2-acetolactate + NADPH + H(+). The enzyme catalyses (2R,3R)-2,3-dihydroxy-3-methylpentanoate + NADP(+) = (S)-2-ethyl-2-hydroxy-3-oxobutanoate + NADPH + H(+). It participates in amino-acid biosynthesis; L-isoleucine biosynthesis; L-isoleucine from 2-oxobutanoate: step 2/4. The protein operates within amino-acid biosynthesis; L-valine biosynthesis; L-valine from pyruvate: step 2/4. In terms of biological role, involved in the biosynthesis of branched-chain amino acids (BCAA). Catalyzes an alkyl-migration followed by a ketol-acid reduction of (S)-2-acetolactate (S2AL) to yield (R)-2,3-dihydroxy-isovalerate. In the isomerase reaction, S2AL is rearranged via a Mg-dependent methyl migration to produce 3-hydroxy-3-methyl-2-ketobutyrate (HMKB). In the reductase reaction, this 2-ketoacid undergoes a metal-dependent reduction by NADPH to yield (R)-2,3-dihydroxy-isovalerate. The polypeptide is Ketol-acid reductoisomerase (NADP(+)) (Clostridium botulinum (strain Eklund 17B / Type B)).